The following is a 199-amino-acid chain: NAD(P)H dehydrogenase (quinone) (199 aa).

A Flavodoxin-like domain is found at 4–190 (ILVLYYSTYG…DGARFQGRHV (187 aa)). Residues 10–15 (STYGHI) and 78–80 (TRF) contribute to the FMN site. Position 12 (Tyr12) interacts with NAD(+). Trp98 is a binding site for substrate. FMN-binding positions include 113–119 (STATQHG) and His134.

Belongs to the WrbA family. FMN serves as cofactor.

The catalysed reaction is a quinone + NADH + H(+) = a quinol + NAD(+). It catalyses the reaction a quinone + NADPH + H(+) = a quinol + NADP(+). The polypeptide is NAD(P)H dehydrogenase (quinone) (Rhizorhabdus wittichii (strain DSM 6014 / CCUG 31198 / JCM 15750 / NBRC 105917 / EY 4224 / RW1) (Sphingomonas wittichii)).